We begin with the raw amino-acid sequence, 226 residues long: Ribonuclease 3 (226 aa).

An RNase III domain is found at Ile-6–Asp-128. Glu-41 is a binding site for Mg(2+). Asp-45 is a catalytic residue. Mg(2+)-binding residues include Asp-114 and Glu-117. Glu-117 is a catalytic residue. The DRBM domain occupies Asp-155 to Leu-225.

It belongs to the ribonuclease III family. As to quaternary structure, homodimer. It depends on Mg(2+) as a cofactor.

It is found in the cytoplasm. The catalysed reaction is Endonucleolytic cleavage to 5'-phosphomonoester.. Its function is as follows. Digests double-stranded RNA. Involved in the processing of primary rRNA transcript to yield the immediate precursors to the large and small rRNAs (23S and 16S). Processes some mRNAs, and tRNAs when they are encoded in the rRNA operon. Processes pre-crRNA and tracrRNA of type II CRISPR loci if present in the organism. This Klebsiella pneumoniae (strain 342) protein is Ribonuclease 3.